The following is a 226-amino-acid chain: Beta-phosphoglucomutase (226 aa).

The active-site Nucleophile is aspartate 7. Mg(2+)-binding residues include aspartate 7 and aspartate 9. Aspartate 7 carries the post-translational modification 4-aspartylphosphate. Aspartate 9 functions as the Proton donor/acceptor in the catalytic mechanism. Beta-D-glucose 6-phosphate contacts are provided by aspartate 9, glycine 44, isoleucine 45, arginine 47, serine 116, arginine 117, and asparagine 118. Aspartate 170 contacts Mg(2+).

Belongs to the HAD-like hydrolase superfamily. CbbY/CbbZ/Gph/YieH family. In terms of assembly, homodimer. Requires Mg(2+) as cofactor. Post-translationally, autophosphorylated.

It localises to the cytoplasm. It carries out the reaction beta-D-glucose 1-phosphate = beta-D-glucose 6-phosphate. Catalyzes the interconversion of D-glucose 1-phosphate (G1P) and D-glucose 6-phosphate (G6P), forming beta-D-glucose 1,6-(bis)phosphate (beta-G16P) as an intermediate. The chain is Beta-phosphoglucomutase (yvdM) from Bacillus subtilis (strain 168).